The following is an 878-amino-acid chain: Leucine--tRNA ligase (878 aa).

Positions 56–66 (PYPSGKLHMGH) match the 'HIGH' region motif. Residues 630–634 (KMSKS) carry the 'KMSKS' region motif. Lys633 is a binding site for ATP.

The protein belongs to the class-I aminoacyl-tRNA synthetase family.

The protein localises to the cytoplasm. It carries out the reaction tRNA(Leu) + L-leucine + ATP = L-leucyl-tRNA(Leu) + AMP + diphosphate. The chain is Leucine--tRNA ligase from Prochlorococcus marinus (strain MIT 9313).